A 316-amino-acid polypeptide reads, in one-letter code: Transaldolase 1 (316 aa).

Lys-131 serves as the catalytic Schiff-base intermediate with substrate.

This sequence belongs to the transaldolase family. Type 1 subfamily. Homodimer.

The protein localises to the cytoplasm. It carries out the reaction D-sedoheptulose 7-phosphate + D-glyceraldehyde 3-phosphate = D-erythrose 4-phosphate + beta-D-fructose 6-phosphate. It participates in carbohydrate degradation; pentose phosphate pathway; D-glyceraldehyde 3-phosphate and beta-D-fructose 6-phosphate from D-ribose 5-phosphate and D-xylulose 5-phosphate (non-oxidative stage): step 2/3. Its function is as follows. Transaldolase is important for the balance of metabolites in the pentose-phosphate pathway. The polypeptide is Transaldolase 1 (Pectobacterium atrosepticum (strain SCRI 1043 / ATCC BAA-672) (Erwinia carotovora subsp. atroseptica)).